A 534-amino-acid chain; its full sequence is Protein FAM83D (534 aa).

Disordered stretches follow at residues 320–372 (TPPS…STLG) and 501–534 (GLNRGRKAQQEARQPNTNIDSGIMGTWPKSRGLQ). A compositionally biased stretch (polar residues) spans 329 to 342 (TKPQAERLTSTPAR). Basic and acidic residues predominate over residues 350 to 362 (RMNKDIEEPDRKS). Polar residues predominate over residues 511–520 (EARQPNTNID).

This sequence belongs to the FAM83 family.

It localises to the cytoplasm. It is found in the cytoskeleton. Its subcellular location is the spindle. The protein localises to the spindle pole. Functionally, may regulate cell proliferation, growth, migration and epithelial to mesenchymal transition. May also be important for proper chromosome congression and alignment during mitosis. In Danio rerio (Zebrafish), this protein is Protein FAM83D.